We begin with the raw amino-acid sequence, 122 residues long: Large ribosomal subunit protein uL18 (122 aa).

The disordered stretch occupies residues 1-24 (MSTLSRKQQTQKRHRRLRRHLSGT). The span at 9–21 (QTQKRHRRLRRHL) shows a compositional bias: basic residues.

Belongs to the universal ribosomal protein uL18 family. Part of the 50S ribosomal subunit; part of the 5S rRNA/L5/L18/L25 subcomplex. Contacts the 5S and 23S rRNAs.

Functionally, this is one of the proteins that bind and probably mediate the attachment of the 5S RNA into the large ribosomal subunit, where it forms part of the central protuberance. The chain is Large ribosomal subunit protein uL18 from Synechococcus sp. (strain WH7803).